A 292-amino-acid polypeptide reads, in one-letter code: Probable 2-(5''-triphosphoribosyl)-3'-dephosphocoenzyme-A synthase (292 aa).

It belongs to the CitG/MdcB family.

The catalysed reaction is 3'-dephospho-CoA + ATP = 2'-(5''-triphospho-alpha-D-ribosyl)-3'-dephospho-CoA + adenine. In terms of biological role, involved in the formation of 2-(5''-phosphoribosyl)-3'-dephosphocoenzyme-A, the prosthetic group of the acyl-carrier protein of the malonate decarboxylase. In Azotobacter vinelandii (strain DJ / ATCC BAA-1303), this protein is Probable 2-(5''-triphosphoribosyl)-3'-dephosphocoenzyme-A synthase.